The sequence spans 916 residues: Rab3 GTPase-activating protein catalytic subunit (916 aa).

The tract at residues 530-574 (NSKRKSEGMVGKASSEEEEDEDDDEGEFFDCDDLTAGAGSPTKAV) is disordered. 2 positions are modified to phosphoserine: S543 and S544. A compositionally biased stretch (acidic residues) spans 545–562 (EEEEDEDDDEGEFFDCDD).

It belongs to the Rab3-GAP catalytic subunit family. The Rab3 GTPase-activating complex is a heterodimer composed of Rab3GAP1 and Rab3-GAP.

Its subcellular location is the cytoplasm. Catalytic subunit of the Rab3 GTPase-activating (Rab3GAP) complex composed of Rab3-GAP and Rab3GAP1, which has both GTPase-activating protein (GAP) activity towards Rab3, and guanine nucleotide exchange factor (GEF) activity towards Rab18. As part of the Rab3GAP complex, required for the rapid induction and sustained expression of synaptic homeostasis at the neuromuscular junction (NMJ). Also participates in the regulation of autophagy in tissues such as larval fat cells and adult muscles. The Rab3GAP complex, acts as a GAP for Rab3 by converting active Rab3-GTP to the inactive form Rab3-GDP. At the neuromuscular junction (NMJ), forms a presynaptic signaling mechanism with Rab3 that regulates progression of synaptic homeostasis at a late stage of vesicle release. Within this mechanism Rab3-GTP acts, directly or indirectly, to inhibit the progression of synaptic homeostasis, and Rab3-GAP functions to inactivate this action of Rab3-GTP. The Rab3GAP complex, acts as a GEF for Rab18 by promoting the conversion of inactive Rab18-GDP to the active form Rab18-GTP. Regulates autophagy as part of a Rab3GAP-Rab18 module. Once Rab18 is activated by the GEF Rab3GAP complex, the Rab3GAP-Rab18 module localizes to autophagosomes, and regulates autolysosome formation and maturation together with the Rab18 interacting effector, the PI3K/Vps34 Complex I. The protein is Rab3 GTPase-activating protein catalytic subunit of Drosophila melanogaster (Fruit fly).